We begin with the raw amino-acid sequence, 203 residues long: Outer-membrane lipoprotein LolB (203 aa).

The first 17 residues, 1–17 (MNRLFRLLPLASLVLTA), serve as a signal peptide directing secretion. Residue cysteine 18 is the site of N-palmitoyl cysteine attachment. Cysteine 18 is lipidated: S-diacylglycerol cysteine.

The protein belongs to the LolB family. Monomer.

Its subcellular location is the cell outer membrane. In terms of biological role, plays a critical role in the incorporation of lipoproteins in the outer membrane after they are released by the LolA protein. This is Outer-membrane lipoprotein LolB from Klebsiella pneumoniae (strain 342).